Here is a 608-residue protein sequence, read N- to C-terminus: Glutamine--fructose-6-phosphate aminotransferase [isomerizing] (608 aa).

Cysteine 2 serves as the catalytic Nucleophile; for GATase activity. Residues 2–217 (CGIVGYIGDK…DHEIAIIKKD (216 aa)) form the Glutamine amidotransferase type-2 domain. 2 consecutive SIS domains span residues 285–424 (TKED…KKGT) and 453–598 (VIQK…VDKP). Lysine 603 functions as the For Fru-6P isomerization activity in the catalytic mechanism.

Homodimer.

Its subcellular location is the cytoplasm. The catalysed reaction is D-fructose 6-phosphate + L-glutamine = D-glucosamine 6-phosphate + L-glutamate. Catalyzes the first step in hexosamine metabolism, converting fructose-6P into glucosamine-6P using glutamine as a nitrogen source. The polypeptide is Glutamine--fructose-6-phosphate aminotransferase [isomerizing] (Caldanaerobacter subterraneus subsp. tengcongensis (strain DSM 15242 / JCM 11007 / NBRC 100824 / MB4) (Thermoanaerobacter tengcongensis)).